A 443-amino-acid polypeptide reads, in one-letter code: MSEMTPREIVSELDSHIIGQDKAKRAVAIALRNRWRRMQLNEELRHEVTPKNILMIGPTGVGKTEIARRLAKLANAPFIKVEATKFTEVGYVGKEVDSIIRDLTDAAVKMVRHQSIEKMRYRAEELAEERILDVLIPPAKNNWGVPDESQEPSATRQTFRKKLREGQLDDKEIEIDLAAAPMGVEIMAPPGMEEMTNQLQSMFQNIAGQKQKPRKIKIKEALKLLIEEEAAKLVNPEELKQQAIDAVEQHGIVFIDEIDKICKRGQTSGPDVSREGVQRDLLPLVEGCTVSTKHGMVKTDHILFIASGAFQVSSPSDLIPELQGRLPIRVELQALTTDDFERILTEPSASLTEQYKALMATEGVTIEFTREGIRKIAEAAWQVNERTENIGARRLHTVLERLMEDISYDASESSGQSITIDAEYVGKHLDELVADEDLSRFIL.

ATP contacts are provided by residues isoleucine 18, 60–65 (GVGKTE), aspartate 256, glutamate 321, and arginine 393.

The protein belongs to the ClpX chaperone family. HslU subfamily. In terms of assembly, a double ring-shaped homohexamer of HslV is capped on each side by a ring-shaped HslU homohexamer. The assembly of the HslU/HslV complex is dependent on binding of ATP.

The protein localises to the cytoplasm. Its function is as follows. ATPase subunit of a proteasome-like degradation complex; this subunit has chaperone activity. The binding of ATP and its subsequent hydrolysis by HslU are essential for unfolding of protein substrates subsequently hydrolyzed by HslV. HslU recognizes the N-terminal part of its protein substrates and unfolds these before they are guided to HslV for hydrolysis. In Yersinia pestis bv. Antiqua (strain Antiqua), this protein is ATP-dependent protease ATPase subunit HslU.